The chain runs to 64 residues: Large ribosomal subunit protein bL35 (64 aa).

Basic residues predominate over residues 1-22 (MPKMKSHTGMGKRVRVTGKGKI). A disordered region spans residues 1–28 (MPKMKSHTGMGKRVRVTGKGKIVKQQAG).

It belongs to the bacterial ribosomal protein bL35 family.

The chain is Large ribosomal subunit protein bL35 from Salinispora tropica (strain ATCC BAA-916 / DSM 44818 / JCM 13857 / NBRC 105044 / CNB-440).